An 822-amino-acid chain; its full sequence is Sushi domain-containing protein 2 (822 aa).

Residues 1 to 27 (MKPALLPWALLLLATALGPGPGPTADA) form the signal peptide. The 39-residue stretch at 28 to 66 (QESCSMRCGALDGPCSCHPTCSGLGTCCLDFRDFCLEIL) folds into the SMB domain. Topologically, residues 28 to 785 (QESCSMRCGA…PKCQPGRSYA (758 aa)) are extracellular. Cystine bridges form between C31-C35, C31-C44, C35-C62, C42-C44, C42-C55, C48-C54, and C55-C62. 2 N-linked (GlcNAc...) asparagine glycosylation sites follow: N162 and N177. An AMOP domain is found at 285–433 (PVAWARTQCQ…PDCPRYMQRR (149 aa)). Residues 445 to 639 (RLASAFGDPH…NWTVHNASSL (195 aa)) form the VWFD domain. The N-linked (GlcNAc...) asparagine glycan is linked to N522. The 58-residue stretch at 723–780 (VSCGWLAPPPNGQKEGNRYLAGSTIYFHCDNGYSLAGAETSTCQADGTWSSPTPKCQP) folds into the Sushi domain. Intrachain disulfides connect C725-C765 and C751-C778. The chain crosses the membrane as a helical span at residues 786-806 (VLLGIIFGGLAVVAAVALVYV). Over 807–822 (LLRRRKGNTHVWGAQP) the chain is Cytoplasmic.

As to quaternary structure, interacts with LGALS1; leads to an increased amount of LGALS1 on the cell surface. Interacts with GPR15LG; the interaction is direct. Highly expressed in breast cancer, but shows a restricted expression pattern in normal tissues such as adipose, adrenal gland, kidney, lung, mammary gland, placenta, thyroid, trachea, and uterus. Also expressed in colon; down-regulated in colon cancer tissues.

Its subcellular location is the cell membrane. May be a cytokine receptor for GPR15LG. May be a tumor suppressor; together with GPR15LG has a growth inhibitory effect on colon cancer cells which includes G1 cell cycle arrest. May play a role in breast tumorigenesis. This Homo sapiens (Human) protein is Sushi domain-containing protein 2 (SUSD2).